The primary structure comprises 281 residues: Secretory carrier-associated membrane protein 5 (281 aa).

The segment at 1-49 (MHHDPNPFDEGADDNPFSNGGGGGARRGGGGGGGGGGGGGKSQFSFGFG) is disordered. Residues 1-139 (MHHDPNPFDE…AQKLQYLAFA (139 aa)) lie on the Cytoplasmic side of the membrane. The span at 19-49 (NGGGGGARRGGGGGGGGGGGGGKSQFSFGFG) shows a compositional bias: gly residues. Residues 76-102 (KELLQWEADLKRREADIRRREEALKSA) adopt a coiled-coil conformation. The next 4 membrane-spanning stretches (helical) occupy residues 140-160 (SWLG…VCWI), 167-187 (LFFL…LMWY), 202-222 (FGWF…AAIA), and 250-270 (IFYF…IWVL). Residues 271–281 (QKVYMYFRGHK) are Cytoplasmic-facing.

The protein belongs to the SCAMP family.

The protein resides in the cell membrane. It localises to the cytoplasmic vesicle. The protein localises to the secretory vesicle membrane. Its function is as follows. Probably involved in membrane trafficking. This is Secretory carrier-associated membrane protein 5 (SCAMP5) from Oryza sativa subsp. japonica (Rice).